Here is a 497-residue protein sequence, read N- to C-terminus: Glucose-6-phosphate 1-dehydrogenase (497 aa).

NADP(+) is bound by residues 17 to 24, R51, and K151; that span reads GASGDLAK. D-glucose 6-phosphate-binding positions include K151, 181–185, E219, and D238; that span reads HYLGK. The active-site Proton acceptor is the H243. Position 334 (K334) interacts with NADP(+). Residues K337 and R342 each contribute to the D-glucose 6-phosphate site. NADP(+) is bound by residues K343, R347, and R371. Residue Q373 coordinates D-glucose 6-phosphate. NADP(+) contacts are provided by residues 379–381, 399–401, R465, and W487; these read YLK and DLS.

It belongs to the glucose-6-phosphate dehydrogenase family.

It localises to the cytoplasm. It is found in the cytosol. The catalysed reaction is D-glucose 6-phosphate + NADP(+) = 6-phospho-D-glucono-1,5-lactone + NADPH + H(+). It functions in the pathway carbohydrate degradation; pentose phosphate pathway; D-ribulose 5-phosphate from D-glucose 6-phosphate (oxidative stage): step 1/3. In terms of biological role, cytosolic glucose-6-phosphate dehydrogenase that catalyzes the first and rate-limiting step of the oxidative branch within the pentose phosphate pathway/shunt, an alternative route to glycolysis for the dissimilation of carbohydrates and a major source of reducing power and metabolic intermediates for fatty acid and nucleic acid biosynthetic processes. The sequence is that of Glucose-6-phosphate 1-dehydrogenase (g6pd-1) from Dictyostelium discoideum (Social amoeba).